A 190-amino-acid chain; its full sequence is Nucleoside triphosphate pyrophosphatase (190 aa).

Asp69 functions as the Proton acceptor in the catalytic mechanism.

It belongs to the Maf family. A divalent metal cation serves as cofactor.

Its subcellular location is the cytoplasm. It carries out the reaction a ribonucleoside 5'-triphosphate + H2O = a ribonucleoside 5'-phosphate + diphosphate + H(+). The enzyme catalyses a 2'-deoxyribonucleoside 5'-triphosphate + H2O = a 2'-deoxyribonucleoside 5'-phosphate + diphosphate + H(+). Its function is as follows. Nucleoside triphosphate pyrophosphatase. May have a dual role in cell division arrest and in preventing the incorporation of modified nucleotides into cellular nucleic acids. The protein is Nucleoside triphosphate pyrophosphatase of Helicobacter pylori (strain P12).